Here is a 1038-residue protein sequence, read N- to C-terminus: TonB-dependent receptor P39 (1038 aa).

A signal peptide spans 1 to 39 (MFKQKLKMKPKIKRNCTFSGLAFILMLLFSSFTVNNLNA). Positions 120-127 (DEVVVIGY) match the TonB box motif. A TBDR plug domain is found at 131-243 (KRADVIGAVG…ANGVVLITTK (113 aa)). A TBDR beta-barrel domain is found at 249–1038 (FPKMTVDYIS…EIVIGLNVEF (790 aa)). A TonB C-terminal box motif is present at residues 1021 to 1038 (SLRYPNQTEIVIGLNVEF).

The protein belongs to the TonB-dependent receptor family.

It localises to the cell outer membrane. Its function is as follows. TonB-dependent receptor probably involved in ulvan degradation. Ulvan is the main polysaccharide component of the Ulvales (green seaweed) cell wall. It is composed of disaccharide building blocks comprising 3-sulfated rhamnose (Rha3S) linked to D-glucuronic acid (GlcA), L-iduronic acid (IduA), or D-xylose (Xyl). The TonB-dependent receptor may mediate transport of ulvan oligosaccharides from the surface of the outer membrane to the periplasm for subsequent degradation. The sequence is that of TonB-dependent receptor P39 from Formosa agariphila (strain DSM 15362 / KCTC 12365 / LMG 23005 / KMM 3901 / M-2Alg 35-1).